We begin with the raw amino-acid sequence, 430 residues long: Adenylosuccinate synthetase (430 aa).

GTP contacts are provided by residues 12-18 (GDEGKGK) and 40-42 (GHT). Asp-13 acts as the Proton acceptor in catalysis. Mg(2+)-binding residues include Asp-13 and Gly-40. Residues 13–16 (DEGK), 38–41 (NAGH), Thr-128, Arg-142, Gln-223, Thr-238, and Arg-302 contribute to the IMP site. His-41 acts as the Proton donor in catalysis. 298–304 (TTTGRPR) serves as a coordination point for substrate. Residues Arg-304, 330–332 (SID), and 412–414 (SVG) contribute to the GTP site.

The protein belongs to the adenylosuccinate synthetase family. Homodimer. Requires Mg(2+) as cofactor.

The protein resides in the cytoplasm. It catalyses the reaction IMP + L-aspartate + GTP = N(6)-(1,2-dicarboxyethyl)-AMP + GDP + phosphate + 2 H(+). It functions in the pathway purine metabolism; AMP biosynthesis via de novo pathway; AMP from IMP: step 1/2. Functionally, plays an important role in the de novo pathway of purine nucleotide biosynthesis. Catalyzes the first committed step in the biosynthesis of AMP from IMP. The protein is Adenylosuccinate synthetase of Streptococcus pyogenes serotype M3 (strain ATCC BAA-595 / MGAS315).